A 185-amino-acid polypeptide reads, in one-letter code: Probable calcium-binding protein CML10 (185 aa).

Residues 1 to 41 (MVKIKMPALFRRRSGSKSPPLPQADPASGGGSPAPTPEEEM) are disordered. 4 consecutive EF-hand domains span residues 36–71 (TPEEEMERVFRKFDANGDGRISRSELGALFESLGHA), 72–107 (ATDDELARMMAEADADGDGFISLDEFAALNATASGD), 110–145 (AVEEDLRHAFRVFDADGNGTISAAELARVLHGLGEK), and 146–181 (ATVQQCRRMIEGVDQNGDGLISFEEFKVMMAGGGSF). Residues aspartate 49, asparagine 51, aspartate 53, arginine 55, glutamate 60, aspartate 85, aspartate 87, aspartate 89, glutamate 96, aspartate 123, aspartate 125, asparagine 127, threonine 129, glutamate 134, aspartate 159, asparagine 161, aspartate 163, and glutamate 170 each coordinate Ca(2+).

Functionally, potential calcium sensor. This chain is Probable calcium-binding protein CML10 (CML10), found in Oryza sativa subsp. japonica (Rice).